Here is a 279-residue protein sequence, read N- to C-terminus: UPF0276 protein SO_2008 (279 aa).

This sequence belongs to the UPF0276 family.

This is UPF0276 protein SO_2008 from Shewanella oneidensis (strain ATCC 700550 / JCM 31522 / CIP 106686 / LMG 19005 / NCIMB 14063 / MR-1).